We begin with the raw amino-acid sequence, 383 residues long: S-adenosylmethionine synthase (383 aa).

Residue H15 coordinates ATP. Position 17 (D17) interacts with Mg(2+). Position 43 (E43) interacts with K(+). Positions 56 and 99 each coordinate L-methionine. A flexible loop region spans residues 99–109; that stretch reads QSPDINQGVDR. Residues 164 to 166, 230 to 231, D239, 245 to 246, A262, and K266 contribute to the ATP site; these read DAK, RF, and RK. D239 contacts L-methionine. K270 is a binding site for L-methionine.

It belongs to the AdoMet synthase family. As to quaternary structure, homotetramer; dimer of dimers. Mg(2+) serves as cofactor. The cofactor is K(+).

The protein localises to the cytoplasm. The catalysed reaction is L-methionine + ATP + H2O = S-adenosyl-L-methionine + phosphate + diphosphate. It functions in the pathway amino-acid biosynthesis; S-adenosyl-L-methionine biosynthesis; S-adenosyl-L-methionine from L-methionine: step 1/1. Its function is as follows. Catalyzes the formation of S-adenosylmethionine (AdoMet) from methionine and ATP. The overall synthetic reaction is composed of two sequential steps, AdoMet formation and the subsequent tripolyphosphate hydrolysis which occurs prior to release of AdoMet from the enzyme. The protein is S-adenosylmethionine synthase of Shewanella denitrificans (strain OS217 / ATCC BAA-1090 / DSM 15013).